The primary structure comprises 300 residues: Cell surface glycoprotein CD200 receptor 1-A (300 aa).

The first 24 residues, 1–24 (MEIAGKAVCVFLLLAIIKLRRSEG), serve as a signal peptide directing secretion. An Ig-like V-type domain is found at 25-124 (INRVSANLGH…GNFHRLYHLT (100 aa)). Residues 25–213 (INRVSANLGH…SINCSSSYRD (189 aa)) lie on the Extracellular side of the membrane. Disulfide bonds link Cys-40–Cys-108 and Cys-143–Cys-192. Asn-45, Asn-76, Asn-105, Asn-171, Asn-200, and Asn-206 each carry an N-linked (GlcNAc...) asparagine glycan. In terms of domain architecture, Ig-like C2-type spans 122 to 206 (HLTVIVAPRM…ATLNETKSIN (85 aa)). A helical transmembrane segment spans residues 214–234 (LILCIAIILSFLIIITFMAVI). At 235-300 (YYLKLHGCRF…NLPQGQSPAT (66 aa)) the chain is on the cytoplasmic side.

Belongs to the CD200R family. Glycosylated. Post-translationally, phosphorylated. As to expression, highly expressed in macrophages, peripheral blood lymphocytes (PBL) and peripheral blood mononuclear cells (PBMC). Weakly expressed in bursa, thymus, spleen, liver and brain.

The protein localises to the membrane. The protein resides in the secreted. The protein is Cell surface glycoprotein CD200 receptor 1-A (CD200R1A) of Gallus gallus (Chicken).